Reading from the N-terminus, the 923-residue chain is Tyrosine-protein kinase receptor torso (923 aa).

The signal sequence occupies residues 1 to 20; it reads MLIFYAKYAFIFWFFVGSNQ. The Extracellular portion of the chain corresponds to 21–399; the sequence is GEMLLMDKIS…VLLSEGNMVK (379 aa). Asn37, Asn63, Asn107, Asn142, Asn146, Asn287, Asn298, Asn314, Asn326, Asn342, Asn348, and Asn377 each carry an N-linked (GlcNAc...) asparagine glycan. A helical transmembrane segment spans residues 400–420; that stretch reads LVLFIIVPICCILMLCSLTFC. Topologically, residues 421–923 are cytoplasmic; that stretch reads RRNRSEVQAL…EEELYLEPLN (503 aa). Residues 475 to 874 form the Protein kinase domain; sequence VLLQDVLGEG…TFSALKHRLG (400 aa). Residues 481-489 and Lys502 contribute to the ATP site; that span reads LGEGAFGLV. Ser608 carries the phosphoserine modification. The segment at 656 to 687 is disordered; that stretch reads YIPKTAEAPKDRPKRKLKPQPKKDSKQDFKSD. A compositionally biased stretch (basic and acidic residues) spans 676–687; it reads PKKDSKQDFKSD. The active-site Proton acceptor is the Asp741.

Belongs to the protein kinase superfamily. Tyr protein kinase family. Mg(2+) is required as a cofactor. In terms of processing, may be auto-phosphorylated on tyrosine residues.

Its subcellular location is the membrane. The catalysed reaction is L-tyrosyl-[protein] + ATP = O-phospho-L-tyrosyl-[protein] + ADP + H(+). Functionally, probable receptor tyrosine kinase which is required for determination of anterior and posterior terminal structures in the embryo. During postembryonic development, involved in the initiation of metamorphosis probably by inducing the production of ecdysone in response to prothoracicotropic hormone Ptth. Binding to Ptth stimulates activation of canonical MAPK signaling leading to ERK phosphorylation. This chain is Tyrosine-protein kinase receptor torso (tor), found in Drosophila melanogaster (Fruit fly).